We begin with the raw amino-acid sequence, 290 residues long: Ribosomal RNA small subunit methyltransferase A (290 aa).

The S-adenosyl-L-methionine site is built by N27, L29, G54, E75, D100, and N125.

It belongs to the class I-like SAM-binding methyltransferase superfamily. rRNA adenine N(6)-methyltransferase family. RsmA subfamily.

The protein localises to the cytoplasm. It carries out the reaction adenosine(1518)/adenosine(1519) in 16S rRNA + 4 S-adenosyl-L-methionine = N(6)-dimethyladenosine(1518)/N(6)-dimethyladenosine(1519) in 16S rRNA + 4 S-adenosyl-L-homocysteine + 4 H(+). Its function is as follows. Specifically dimethylates two adjacent adenosines (A1518 and A1519) in the loop of a conserved hairpin near the 3'-end of 16S rRNA in the 30S particle. May play a critical role in biogenesis of 30S subunits. This Streptococcus thermophilus (strain ATCC BAA-491 / LMD-9) protein is Ribosomal RNA small subunit methyltransferase A.